The sequence spans 446 residues: Chromosomal replication initiator protein DnaA (446 aa).

A domain I, interacts with DnaA modulators region spans residues 1–73; that stretch reads MAAQLNELWQ…INSMKIITTK (73 aa). Residues 73 to 107 form a domain II region; sequence KKYDIAFLISSEEALETDEDQETDTNNVNTDTSSS. A domain III, AAA+ region region spans residues 108–324; that stretch reads MLNPKYKFDS…GALIRIVAFS (217 aa). The ATP site is built by Gly-152, Gly-154, Lys-155, and Thr-156. The interval 325 to 446 is domain IV, binds dsDNA; that stretch reads SLTNKEISVD…NEITKRFSPK (122 aa).

Belongs to the DnaA family. As to quaternary structure, oligomerizes as a right-handed, spiral filament on DNA at oriC.

Its subcellular location is the cytoplasm. In terms of biological role, plays an essential role in the initiation and regulation of chromosomal replication. ATP-DnaA binds to the origin of replication (oriC) to initiate formation of the DNA replication initiation complex once per cell cycle. Binds the DnaA box (a 9 base pair repeat at the origin) and separates the double-stranded (ds)DNA. Forms a right-handed helical filament on oriC DNA; dsDNA binds to the exterior of the filament while single-stranded (ss)DNA is stabiized in the filament's interior. The ATP-DnaA-oriC complex binds and stabilizes one strand of the AT-rich DNA unwinding element (DUE), permitting loading of DNA polymerase. After initiation quickly degrades to an ADP-DnaA complex that is not apt for DNA replication. Binds acidic phospholipids. The polypeptide is Chromosomal replication initiator protein DnaA (Clostridium acetobutylicum (strain ATCC 824 / DSM 792 / JCM 1419 / IAM 19013 / LMG 5710 / NBRC 13948 / NRRL B-527 / VKM B-1787 / 2291 / W)).